A 192-amino-acid chain; its full sequence is Ribosomal RNA small subunit methyltransferase G (192 aa).

S-adenosyl-L-methionine is bound by residues Gly63, Phe68, 112–113 (IE), and Arg125.

It belongs to the methyltransferase superfamily. RNA methyltransferase RsmG family.

The protein localises to the cytoplasm. The enzyme catalyses guanosine(527) in 16S rRNA + S-adenosyl-L-methionine = N(7)-methylguanosine(527) in 16S rRNA + S-adenosyl-L-homocysteine. Specifically methylates the N7 position of guanine in position 527 of 16S rRNA. This Rickettsia felis (strain ATCC VR-1525 / URRWXCal2) (Rickettsia azadi) protein is Ribosomal RNA small subunit methyltransferase G.